The following is a 521-amino-acid chain: Bifunctional purine biosynthesis protein PurH (521 aa).

In terms of domain architecture, MGS-like spans M1–V147.

The protein belongs to the PurH family.

The catalysed reaction is (6R)-10-formyltetrahydrofolate + 5-amino-1-(5-phospho-beta-D-ribosyl)imidazole-4-carboxamide = 5-formamido-1-(5-phospho-D-ribosyl)imidazole-4-carboxamide + (6S)-5,6,7,8-tetrahydrofolate. It carries out the reaction IMP + H2O = 5-formamido-1-(5-phospho-D-ribosyl)imidazole-4-carboxamide. It functions in the pathway purine metabolism; IMP biosynthesis via de novo pathway; 5-formamido-1-(5-phospho-D-ribosyl)imidazole-4-carboxamide from 5-amino-1-(5-phospho-D-ribosyl)imidazole-4-carboxamide (10-formyl THF route): step 1/1. The protein operates within purine metabolism; IMP biosynthesis via de novo pathway; IMP from 5-formamido-1-(5-phospho-D-ribosyl)imidazole-4-carboxamide: step 1/1. This Syntrophotalea carbinolica (strain DSM 2380 / NBRC 103641 / GraBd1) (Pelobacter carbinolicus) protein is Bifunctional purine biosynthesis protein PurH.